The following is a 444-amino-acid chain: Tubulin gamma chain (444 aa).

144 to 150 (SGGTGSG) contributes to the GTP binding site.

Belongs to the tubulin family.

It localises to the cytoplasm. It is found in the cytoskeleton. Its subcellular location is the microtubule organizing center. The protein localises to the centrosome. The protein resides in the cell junction. It localises to the hemidesmosome. It is found in the adherens junction. Its function is as follows. Tubulin is the major constituent of microtubules. The gamma chain is found at microtubule organizing centers (MTOC) such as the spindle poles or the centrosome, suggesting that it is involved in the minus-end nucleation of microtubule assembly. In Caenorhabditis elegans, this protein is Tubulin gamma chain (tbg-1).